The primary structure comprises 491 residues: 2,3-bisphosphoglycerate-independent phosphoglycerate mutase (491 aa).

Mn(2+) is bound by residues aspartate 11 and serine 61. Residue serine 61 is the Phosphoserine intermediate of the active site. Substrate is bound by residues histidine 118, 147–148, arginine 177, arginine 183, 247–250, and lysine 320; these read RD and RNDR. Mn(2+) is bound by residues aspartate 386, histidine 390, aspartate 427, histidine 428, and histidine 445.

The protein belongs to the BPG-independent phosphoglycerate mutase family. In terms of assembly, monomer. Requires Mn(2+) as cofactor.

The catalysed reaction is (2R)-2-phosphoglycerate = (2R)-3-phosphoglycerate. It participates in carbohydrate degradation; glycolysis; pyruvate from D-glyceraldehyde 3-phosphate: step 3/5. In terms of biological role, catalyzes the interconversion of 2-phosphoglycerate and 3-phosphoglycerate. The polypeptide is 2,3-bisphosphoglycerate-independent phosphoglycerate mutase (Helicobacter pylori (strain ATCC 700392 / 26695) (Campylobacter pylori)).